The chain runs to 102 residues: UV-induced protein uvi31 (102 aa).

This sequence belongs to the BolA/IbaG family.

The protein resides in the mitochondrion matrix. The protein localises to the cytoplasm. Its subcellular location is the nucleus. In terms of biological role, acts as a mitochondrial iron-sulfur (Fe-S) cluster assembly factor that facilitates [4Fe-4S] cluster insertion into a subset of mitochondrial proteins such as lipoyl synthase (LS) and succinate dehydrogenase (SDH). Required during the last step of iron-sulfur protein assembly when the iron-sulfur cluster is inserted into the target protein. Probably acts together with the monothiol glutaredoxin grx5. Not required for [2Fe-2S] cluster insertion into mitochondrial proteins. May be involved in control of cell division, especially during the resumption from cell cycle arrest. The chain is UV-induced protein uvi31 from Schizosaccharomyces pombe (strain 972 / ATCC 24843) (Fission yeast).